The following is a 617-amino-acid chain: Isopropyl malate synthase gloH (617 aa).

One can recognise a Pyruvate carboxyltransferase domain in the interval 47 to 325 (PIWLSTDLRD…ETGLDFSDLL (279 aa)).

It belongs to the alpha-IPM synthase/homocitrate synthase family. LeuA type 2 subfamily.

It carries out the reaction 3-methyl-2-oxobutanoate + acetyl-CoA + H2O = (2S)-2-isopropylmalate + CoA + H(+). It participates in mycotoxin biosynthesis. Functionally, 2-isopropylmalate synthase; part of the gene cluster that mediates the biosynthesis of pneumocandins, lipohexapeptides of the echinocandin family that prevent fungal cell wall formation by non-competitive inhibition of beta-1,3-glucan synthase. The 10,12-dimethylmyristoyl side chain is synthesized by the reducing polyketide synthase gloL/GLPKS4. The thioesterase gloN/GLHYD exclusively interacts with gloL/GLPKS4 to maintain turnover of the polyketide side chain. The 10R,12S-dimethylmyristic acid is then transferred to the first thiolation domain of the nonribosomal peptide synthetase gloA/GLNRPS4 by the acyl-AMP ligase gloD/GLligase, followed by its acylation to L-ornithine to trigger elongation of the cyclic hexapeptide. L-ornithine, 4R-hydroxyl-L-proline (generated from L-proline by the dioxygenase gloF/GLOXY2), 3S-hydroxyl-L-homotyrosine (generated by gloG/GLHtyB, gloH/GLHtyA, gloI/GLHtyC, gloJ/GLHtyD and hydroxylated at C-3 by the dioxygenase gloM/GLOXY1), 3R-hydroxyl-L-glutamine (generated from L-glutamine probably by the dioxygenase gloE/GLOXY3) and 3S-hydroxyl-L-proline (generated from L-proline by the dioxygenase gloF/GLOXY2 to yield pneumocandin B0), or 3S-hydroxyl-4S-methyl-L-proline (generated from L-leucine by the dioxygenase gloC/GLOXY4 to yield pneumocandin A0) are sequentially added to the growing chain. The last C domain of gloA/GLNRPS4 is proposed to be responsible for cyclization by condensation to form the peptide bond between L-ornithine and 3S-hydroxyl-4S-methyl-L-proline (for pneumocandin A0) or 3S-hydroxyl-L-proline (for pneumocandin B0). Finally, the subsequent C-4 hydroxylation of 3S-hydroxyl-L-homotyrosine and L-ornithine dihydroxylation at C-4 and C-5 are performed by the cytochrome P450 monooxygenases gloP/GLP450-1 and gloO/GLP450-2, respectively. This chain is Isopropyl malate synthase gloH, found in Glarea lozoyensis (strain ATCC 20868 / MF5171).